A 363-amino-acid chain; its full sequence is Fructose-bisphosphate aldolase 1 (363 aa).

Aspartate 34 is a dihydroxyacetone phosphate binding site. The D-glyceraldehyde 3-phosphate site is built by serine 36 and threonine 39. Beta-D-fructose 1,6-bisphosphate is bound at residue arginine 43. Lysine 107 is a D-glyceraldehyde 3-phosphate binding site. Residue lysine 146 coordinates dihydroxyacetone phosphate. Glutamate 189 provides a ligand contact to D-glyceraldehyde 3-phosphate. Glutamate 189 serves as the catalytic Proton acceptor. The dihydroxyacetone phosphate site is built by lysine 231, serine 273, and glycine 274. Catalysis depends on lysine 231, which acts as the Schiff-base intermediate with dihydroxyacetone phosphate. Beta-D-fructose 1,6-bisphosphate is bound by residues 273–275 and serine 301; that span reads SGG. Glycine 303 and arginine 304 together coordinate dihydroxyacetone phosphate. Beta-D-fructose 1,6-bisphosphate is bound at residue arginine 304.

This sequence belongs to the class I fructose-bisphosphate aldolase family. As to quaternary structure, homotetramer. Component of a complex, at least composed of ald-1, microneme protein MIC2 and ACT1. Interacts with microneme protein MIC2 (via cytoplasmic tail). Interacts with ACT1 (F-actin).

It is found in the cytoplasm. It catalyses the reaction beta-D-fructose 1,6-bisphosphate = D-glyceraldehyde 3-phosphate + dihydroxyacetone phosphate. The protein operates within carbohydrate degradation; glycolysis; D-glyceraldehyde 3-phosphate and glycerone phosphate from D-glucose: step 4/4. Functionally, plays a key role in glycolysis by catalyzing the cleavage of fructose 1,6-bisphosphate into dihydroxyacetone phosphate and glyceraldehyde 3-phosphate. Forms a bridge between cell surface adhesins and the actin cytoskeleton. Required for parasite invasion of host cells. In Toxoplasma gondii, this protein is Fructose-bisphosphate aldolase 1.